The following is a 255-amino-acid chain: Aprataxin and PNK-like factor (255 aa).

The span at 1 to 11 shows a compositional bias: low complexity; it reads MSATDASTADS. Disordered regions lie at residues 1–117, 131–168, and 195–255; these read MSAT…VSSS, RRNP…FGNA, and RLRQ…DDYD. Basic and acidic residues-rich tracts occupy residues 12–22, 40–64, and 137–150; these read GAKRKSSEDIT, KSEE…KAEP, and RSAE…DYRR. PBZ-type zinc fingers lie at residues 121–142 and 161–182; these read TSCR…AEAH and PACP…DYSH. Residues 207–218 show a composition bias toward acidic residues; sequence DDSGTDEEDEPF. The span at 221–230 shows a compositional bias: basic and acidic residues; sequence DNDRDADYRP. The span at 234–244 shows a compositional bias: acidic residues; that stretch reads INEDEDDELEF.

It belongs to the APLF family.

In terms of biological role, displays apurinic-apyrimidinic (AP) endonuclease and 3'-5' exonuclease activities in vitro. This chain is Aprataxin and PNK-like factor, found in Drosophila melanogaster (Fruit fly).